The primary structure comprises 130 residues: Small ribosomal subunit protein uS9 (130 aa).

It belongs to the universal ribosomal protein uS9 family.

The sequence is that of Small ribosomal subunit protein uS9 from Pseudomonas syringae pv. tomato (strain ATCC BAA-871 / DC3000).